The following is a 117-amino-acid chain: Large ribosomal subunit protein bL20 (117 aa).

It belongs to the bacterial ribosomal protein bL20 family.

Its function is as follows. Binds directly to 23S ribosomal RNA and is necessary for the in vitro assembly process of the 50S ribosomal subunit. It is not involved in the protein synthesizing functions of that subunit. The chain is Large ribosomal subunit protein bL20 from Roseiflexus castenholzii (strain DSM 13941 / HLO8).